The following is a 359-amino-acid chain: uncharacterized protein (359 aa).

Residue 46–53 coordinates ATP; the sequence is GPKSSGKS.

It belongs to the archaeal ATPase family.

This is an uncharacterized protein from Methanocaldococcus jannaschii (strain ATCC 43067 / DSM 2661 / JAL-1 / JCM 10045 / NBRC 100440) (Methanococcus jannaschii).